Consider the following 145-residue polypeptide: Globin-1 (145 aa).

The region spanning 1 to 145 (GISADQAKAL…VIVPGMKAGY (145 aa)) is the Globin domain. 2 residues coordinate heme b: His-63 and His-92.

The protein belongs to the globin family. In terms of assembly, monomer.

This is Globin-1 from Liolophura japonica (Chiton).